We begin with the raw amino-acid sequence, 293 residues long: NAD-dependent protein deacetylase (293 aa).

One can recognise a Deacetylase sirtuin-type domain in the interval 1–284 (MTVAITQTGP…QPPDPLHTAT (284 aa)). NAD(+)-binding positions include 27 to 47 (GAGC…GGWK) and 105 to 108 (QNVD). His123 serves as the catalytic Proton acceptor. Residues Cys131, Cys134, Cys182, and Cys185 each coordinate Zn(2+). NAD(+)-binding positions include 222–224 (GSS), 248–250 (NFG), and Cys266.

Belongs to the sirtuin family. Class II subfamily. Zn(2+) serves as cofactor.

Its subcellular location is the cytoplasm. It catalyses the reaction N(6)-acetyl-L-lysyl-[protein] + NAD(+) + H2O = 2''-O-acetyl-ADP-D-ribose + nicotinamide + L-lysyl-[protein]. NAD-dependent protein deacetylase which modulates the activities of several enzymes which are inactive in their acetylated form. This chain is NAD-dependent protein deacetylase, found in Xanthomonas campestris pv. campestris (strain B100).